Reading from the N-terminus, the 1015-residue chain is Translation initiation factor IF-2 (1015 aa).

Disordered regions lie at residues 124–144, 159–179, 196–230, and 250–386; these read EKEPVKEEPKPQPVAAEEKKV, EVTVTPATSEPKPVKEEPKPV, KKEEPKVVVSPEKTEKKEEKPVAEAPVTPVEKEEE, and IDLA…VSEE. Basic and acidic residues-rich tracts occupy residues 196 to 217 and 265 to 315; these read KKEEPKVVVSPEKTEKKEEKPV and SKEE…DPNG. Positions 514–684 constitute a tr-type G domain; it reads HRAPIVTVMG…LLEAEMLDLK (171 aa). The G1 stretch occupies residues 523–530; sequence GHVDHGKT. 523–530 lines the GTP pocket; it reads GHVDHGKT. The tract at residues 548 to 552 is G2; it reads GITQH. Residues 570–573 are G3; it reads DTPG. GTP is bound by residues 570–574 and 624–627; these read DTPGH and NKID. The segment at 624-627 is G4; that stretch reads NKID. Residues 660 to 662 form a G5 region; it reads SAK.

The protein belongs to the TRAFAC class translation factor GTPase superfamily. Classic translation factor GTPase family. IF-2 subfamily.

The protein localises to the cytoplasm. In terms of biological role, one of the essential components for the initiation of protein synthesis. Protects formylmethionyl-tRNA from spontaneous hydrolysis and promotes its binding to the 30S ribosomal subunits. Also involved in the hydrolysis of GTP during the formation of the 70S ribosomal complex. The chain is Translation initiation factor IF-2 from Bacteroides fragilis (strain ATCC 25285 / DSM 2151 / CCUG 4856 / JCM 11019 / LMG 10263 / NCTC 9343 / Onslow / VPI 2553 / EN-2).